We begin with the raw amino-acid sequence, 190 residues long: Large ribosomal subunit protein bL9 (190 aa).

The protein belongs to the bacterial ribosomal protein bL9 family.

Binds to the 23S rRNA. The sequence is that of Large ribosomal subunit protein bL9 from Methylorubrum populi (strain ATCC BAA-705 / NCIMB 13946 / BJ001) (Methylobacterium populi).